Here is a 503-residue protein sequence, read N- to C-terminus: Maturase K (503 aa).

The protein belongs to the intron maturase 2 family. MatK subfamily.

Its subcellular location is the plastid. The protein localises to the chloroplast. Usually encoded in the trnK tRNA gene intron. Probably assists in splicing its own and other chloroplast group II introns. This Stangeria eriopus (Natal grass cycad) protein is Maturase K.